The following is a 67-amino-acid chain: MASLKKSLFLVLFLGMVSLSICDKEKREGENEEEEEEHEEESEEKRGLLSFLPKVIGVIGHLIHPPS.

A signal peptide spans 1–22 (MASLKKSLFLVLFLGMVSLSIC). A propeptide spanning residues 23–46 (DKEKREGENEEEEEEHEEESEEKR) is cleaved from the precursor. The disordered stretch occupies residues 24 to 46 (KEKREGENEEEEEEHEEESEEKR). The span at 30-42 (ENEEEEEEHEEES) shows a compositional bias: acidic residues.

In terms of tissue distribution, expressed by the skin glands.

The protein resides in the secreted. In terms of biological role, fallaxidin-4.1 shows antibacterial activity against the Gram-positive bacteria L.lactis (MIC=12 uM), M.luteus (MIC=100 uM), S.epidermidis (MIC=100 uM) and S.uberis (MIC=50 uM). No antibacterial activity against the Gram-positive bacteria B.cereus, E.faecalis, L.innocua, S.aureus, or the Gram-negative bacteria E.cloacae and E.coli. Inhibits the formation of NO by neuronal nitric oxide synthase with an IC(50) of 13.3 uM. In Litoria fallax (Eastern dwarf tree frog), this protein is Preprofallaxidin-1.